Reading from the N-terminus, the 634-residue chain is E3 ubiquitin/ISG15 ligase TRIM25 (634 aa).

An RING-type zinc finger spans residues cysteine 13–arginine 54. Residue threonine 90 is modified to Phosphothreonine. Serine 99 carries the phosphoserine modification. A Glycyl lysine isopeptide (Lys-Gly) (interchain with G-Cter in ISG15) cross-link involves residue lysine 116. The stretch at alanine 215–glutamate 305 forms a coiled coil. N6-acetyllysine is present on lysine 272. Tyrosine 277 is subject to Phosphotyrosine. Positions lysine 353–aspartate 437 are disordered. Residues glycine 363–lysine 376 show a composition bias toward polar residues. The B30.2/SPRY domain maps to lysine 444–lysine 634. Lysine 572 bears the N6-acetyllysine mark.

In terms of assembly, forms homodimers. Interacts (via SPRY domain) with RIGI (via CARD domain). Interacts with ZFHX3. Interacts with NLRP12; this interaction reduces the E3 ubiquitin ligase TRIM25-mediated 'Lys-63'-linked RIGI activation. Interacts with the KHDC3L/FILIA-OOEP/FLOPED scaffold complex and BLM at DNA replication forks. Interacts with RTN3; this interaction prevents RIGI ubiquitination. Interacts with YWHAE. Post-translationally, auto-ISGylated. In terms of tissue distribution, ubiquitous.

The protein resides in the cytoplasm. Its subcellular location is the stress granule. It is found in the nucleus. The catalysed reaction is S-ubiquitinyl-[E2 ubiquitin-conjugating enzyme]-L-cysteine + [acceptor protein]-L-lysine = [E2 ubiquitin-conjugating enzyme]-L-cysteine + N(6)-ubiquitinyl-[acceptor protein]-L-lysine.. The enzyme catalyses ATP + [ISG15] + [protein]-lysine = AMP + diphosphate + [protein]-N-ISGyllysine.. The protein operates within protein modification; protein ubiquitination. Its function is as follows. Functions as a ubiquitin E3 ligase and as an ISG15 E3 ligase. Involved in innate immune defense against viruses by mediating ubiquitination of RIGI and IFIH1. Mediates 'Lys-63'-linked polyubiquitination of the RIGI N-terminal CARD-like region and may play a role in signal transduction that leads to the production of interferons in response to viral infection. Mediates 'Lys-63'-linked polyubiquitination of IFIH1. Promotes ISGylation of 14-3-3 sigma (SFN), an adapter protein implicated in the regulation of a large spectrum signaling pathway. Mediates estrogen action in various target organs. Mediates the ubiquitination and subsequent proteasomal degradation of ZFHX3. Plays a role in promoting the restart of stalled replication forks via interaction with the KHDC3L-OOEP scaffold and subsequent ubiquitination of BLM, resulting in the recruitment and retainment of BLM at DNA replication forks. Plays an essential role in the antiviral activity of ZAP/ZC3HAV1; an antiviral protein which inhibits the replication of certain viruses. Mechanistically, mediates 'Lys-63'-linked polyubiquitination of ZAP/ZC3HAV1 that is required for its optimal binding to target mRNA. Also mediates the ubiquitination of various substrates implicated in stress granule formation, nonsense-mediated mRNA decay, nucleoside synthesis and mRNA translation and stability. In Mus musculus (Mouse), this protein is E3 ubiquitin/ISG15 ligase TRIM25 (Trim25).